The primary structure comprises 715 residues: Methionine--tRNA ligase (715 aa).

Positions 20–30 (PYANGKAHIGH) match the 'HIGH' region motif. 4 residues coordinate Zn(2+): C151, C154, C163, and C167. The short motif at 334 to 338 (KFSKT) is the 'KMSKS' region element. Residue K337 participates in ATP binding. A disordered region spans residues 559–593 (ANAKRNGVKGGEKEPSKSEGMGPSEASKASEKTVD). A tRNA-binding domain is found at 613-715 (DFAKLDIRVG…KEIKSGSRIR (103 aa)).

It belongs to the class-I aminoacyl-tRNA synthetase family. MetG type 1 subfamily. Homodimer. Zn(2+) serves as cofactor.

It is found in the cytoplasm. It carries out the reaction tRNA(Met) + L-methionine + ATP = L-methionyl-tRNA(Met) + AMP + diphosphate. Is required not only for elongation of protein synthesis but also for the initiation of all mRNA translation through initiator tRNA(fMet) aminoacylation. This chain is Methionine--tRNA ligase, found in Methanosarcina mazei (strain ATCC BAA-159 / DSM 3647 / Goe1 / Go1 / JCM 11833 / OCM 88) (Methanosarcina frisia).